Here is a 96-residue protein sequence, read N- to C-terminus: Defensin-like protein 69 (96 aa).

The N-terminal stretch at 1–19 (MGSSKLLVAFTLIVMMTIS) is a signal peptide. 4 cysteine pairs are disulfide-bonded: cysteine 37-cysteine 86, cysteine 41-cysteine 64, cysteine 50-cysteine 84, and cysteine 54-cysteine 85.

This sequence belongs to the DEFL family.

The protein resides in the secreted. The polypeptide is Defensin-like protein 69 (Arabidopsis thaliana (Mouse-ear cress)).